The following is a 309-amino-acid chain: Taste receptor type 2 member 31 (309 aa).

At 1–2 (MT) the chain is on the extracellular side. Residues 3–23 (TFIPIIFSSVVVVLFVIGNFA) traverse the membrane as a helical segment. Residues 24 to 55 (NGFIALVNSIERVKRQKISFADQILTALAVSR) are Cytoplasmic-facing. Residues 56–76 (VGLLWVLLLNWYSTVFNPAFY) traverse the membrane as a helical segment. Over 77–100 (SVEVRTTAYNVWAVTGHFSNWLAT) the chain is Extracellular. A helical membrane pass occupies residues 101–121 (SLSIFYLLKIANFSNLIFLHL). Topologically, residues 122-126 (KRRVK) are cytoplasmic. Residues 127-147 (SVILVMLLGPLLFLACQLFVI) form a helical membrane-spanning segment. Over 148–181 (NMKEIVRTKEYEGNLTWKIKLRSAVYLSDATVTT) the chain is Extracellular. Asn161 carries an N-linked (GlcNAc...) asparagine glycan. The helical transmembrane segment at 182 to 202 (LGNLVPFTLTLLCFLLLICSL) threads the bilayer. Residues 203 to 229 (CKHLKKMQLHGKGSQDPSTKVHIKALQ) are Cytoplasmic-facing. Residues 230-250 (TVIFFLLLCAVYFLSIMISVW) form a helical membrane-spanning segment. At 251 to 259 (SFGSLENKP) the chain is on the extracellular side. Residues 260 to 280 (VFMFCKAIRFSYPSIHPFILI) form a helical membrane-spanning segment. Residues 281-309 (WGNKKLKQTFLSVLRQVRYWVKGEKPSSP) are Cytoplasmic-facing.

Belongs to the G-protein coupled receptor T2R family. As to expression, expressed in subsets of taste receptor cells of the tongue and exclusively in gustducin-positive cells.

It localises to the membrane. Functionally, receptor that may play a role in the perception of bitterness and is gustducin-linked. May play a role in sensing the chemical composition of the gastrointestinal content. The activity of this receptor may stimulate alpha gustducin, mediate PLC-beta-2 activation and lead to the gating of TRPM5. Activated by the sulfonyl amide sweeteners saccharin and acesulfame K. This Homo sapiens (Human) protein is Taste receptor type 2 member 31 (TAS2R31).